A 476-amino-acid polypeptide reads, in one-letter code: Casein kinase 1-like protein 7 (476 aa).

A Protein kinase domain is found at 9–278; sequence FKLGKKIGSG…LKRLFRDLFI (270 aa). ATP is bound by residues 15–23 and Lys38; that span reads IGSGSFGEL. Asp128 serves as the catalytic Proton acceptor. Disordered regions lie at residues 299-324 and 340-464; these read GSSS…DPIE and PGAV…TRED. The span at 357-367 shows a compositional bias: basic and acidic residues; that stretch reads PRDRSRSRNSD. Positions 382–422 are enriched in low complexity; the sequence is ANSSSRYRASSSRKAVAASSSRPSSAGGPSESRTSSRLVSS. The segment covering 423–432 has biased composition (gly residues); it reads SGGGGSGSGN.

This sequence belongs to the protein kinase superfamily. CK1 Ser/Thr protein kinase family. Casein kinase I subfamily. Monomer. Autophosphorylated.

It is found in the cytoplasm. The enzyme catalyses L-seryl-[protein] + ATP = O-phospho-L-seryl-[protein] + ADP + H(+). The catalysed reaction is L-threonyl-[protein] + ATP = O-phospho-L-threonyl-[protein] + ADP + H(+). In terms of biological role, casein kinases are operationally defined by their preferential utilization of acidic proteins such as caseins as substrates. It can phosphorylate a large number of proteins. This chain is Casein kinase 1-like protein 7, found in Arabidopsis thaliana (Mouse-ear cress).